Consider the following 216-residue polypeptide: Somatotropin (216 aa).

An N-terminal signal peptide occupies residues 1 to 26 (MAAGSWTAGLLAFALLCLPWPQEASA). His45 provides a ligand contact to Zn(2+). The cysteines at positions 78 and 189 are disulfide-linked. Residue Ser131 is modified to Phosphoserine. Glu198 contributes to the Zn(2+) binding site. Cysteines 206 and 214 form a disulfide.

It belongs to the somatotropin/prolactin family.

It localises to the secreted. In terms of biological role, plays an important role in growth control. Its major role in stimulating body growth is to stimulate the liver and other tissues to secrete IGF1. It stimulates both the differentiation and proliferation of myoblasts. It also stimulates amino acid uptake and protein synthesis in muscle and other tissues. The sequence is that of Somatotropin (GH1) from Oryctolagus cuniculus (Rabbit).